The following is a 532-amino-acid chain: Cytochrome P450 monooxygenase pgmC (532 aa).

A helical transmembrane segment spans residues 15-32; it reads ISTLAVLIGFIALLTAWL. Cysteine 438 is a heme binding site.

It belongs to the cytochrome P450 family. Heme is required as a cofactor.

Its subcellular location is the membrane. It functions in the pathway pigment biosynthesis. Its pathway is secondary metabolite biosynthesis. Functionally, cytochrome P450 monooxygenase; part of the gene cluster that mediates the biosynthesis of pleosporalin A, ascomycone A, as well as a third cryptic naphthoquinone derived pigment, all responsible for the coloration of conidia. Involved in the oxidation of fusarubinaldehyde at C-9. PgmC has low substrate-specificity and is also able to use the pgmA product 3-acetonyl-1,6,8-trihydroxy-2-naphthaldehyde as a substrate. The pathway begins with the biosynthesis of the cyclized heptaketide 3-acetonyl-1,6,8-trihydroxy-2-naphthaldehyde by the NR-PKS pgmA. The C-6 hydroxyl group is further methylated by the O-methyltransferase pgmB to yield fusarubinaldehyde which is in turn oxidized by the cytochrome P450 monooxygenase pgmC at C-9. The C-1 hydroxyl group is then methylated spontaneously. Although pgmE, pgmD and pgmH are essential for the production of pleosporalin A, it is not the case for the 2 other final products and it remains difficult to assign a specific function to each enzyme. PgmF and pgmG seem not to be involved in pigment biosynthesis although they were regulated by the cluster-specific transcription factor pgmR. This is Cytochrome P450 monooxygenase pgmC from Aspergillus terreus (strain NIH 2624 / FGSC A1156).